Here is a 550-residue protein sequence, read N- to C-terminus: Arginine--tRNA ligase (550 aa).

Residues 130–140 (ANPTGPIHIGG) carry the 'HIGH' region motif.

The protein belongs to the class-I aminoacyl-tRNA synthetase family. Monomer.

Its subcellular location is the cytoplasm. It carries out the reaction tRNA(Arg) + L-arginine + ATP = L-arginyl-tRNA(Arg) + AMP + diphosphate. The protein is Arginine--tRNA ligase of Mycobacterium ulcerans (strain Agy99).